A 313-amino-acid polypeptide reads, in one-letter code: Transcription initiation factor IIB 2 (313 aa).

The segment at 13 to 44 (APKRCPECHSEHLIRDYEHGELICADCGAVIE) adopts a TFIIB-type zinc-finger fold. Cys17, Cys20, Cys36, and Cys39 together coordinate Zn(2+). 2 repeat units span residues 130-213 (QLLN…AKEL) and 224-305 (SYIA…EISK).

Belongs to the TFIIB family.

In terms of biological role, stabilizes TBP binding to an archaeal box-A promoter. Also responsible for recruiting RNA polymerase II to the pre-initiation complex (DNA-TBP-TFIIB). The protein is Transcription initiation factor IIB 2 of Thermoplasma volcanium (strain ATCC 51530 / DSM 4299 / JCM 9571 / NBRC 15438 / GSS1).